The following is a 206-amino-acid chain: Transmembrane emp24 domain-containing protein bai (206 aa).

Positions 1-17 are cleaved as a signal peptide; it reads MAKATFFYFLFIGYVWP. At 18-172 the chain is on the lumenal side; sequence IDSVMFNLAP…RDTNEKTNSR (155 aa). One can recognise a GOLD domain in the interval 30-140; the sequence is QKCLKEDIQA…LKPLEVDLKR (111 aa). Residues 173–193 form a helical membrane-spanning segment; sequence VLFFSIFSMCCLLGLATWQVL. Over 194 to 206 the chain is Cytoplasmic; it reads YLRRYFKAKKLIE.

It belongs to the EMP24/GP25L family.

It localises to the membrane. Functionally, eca and bai are essential, though not redundant, for dorsoventral patterning of the embryo. Specifically required during early embryogenesis for the activity of maternal tkv, while the zygotic tkv is not affected. In Drosophila persimilis (Fruit fly), this protein is Transmembrane emp24 domain-containing protein bai.